The chain runs to 152 residues: Clitocypin-5 (152 aa).

Homodimer.

Binds and inhibits cysteine proteinases. Inhibits most strongly papain and cathepsin L, more weakly bromelain and cathepsin B while it is completely ineffective against cathepsin H. The chain is Clitocypin-5 (clt5) from Clitocybe nebularis (Clouded agaric).